The chain runs to 250 residues: NAD-dependent protein deacylase (250 aa).

The region spanning 1-248 (MLGEVSKILA…PKLVEEIRRI (248 aa)) is the Deacetylase sirtuin-type domain. NAD(+) is bound at residue 20 to 39 (GAGISAESGIPTFRGKDGLW). Residues tyrosine 64 and arginine 67 each coordinate substrate. NAD(+) is bound at residue 98–101 (QNVD). The active-site Proton acceptor is the histidine 116. Positions 124, 127, 150, and 153 each coordinate Zn(2+). NAD(+)-binding positions include 190 to 192 (GTS), 216 to 218 (NIE), and alanine 234.

This sequence belongs to the sirtuin family. Class III subfamily. Requires Zn(2+) as cofactor.

The protein resides in the cytoplasm. It carries out the reaction N(6)-acetyl-L-lysyl-[protein] + NAD(+) + H2O = 2''-O-acetyl-ADP-D-ribose + nicotinamide + L-lysyl-[protein]. It catalyses the reaction N(6)-succinyl-L-lysyl-[protein] + NAD(+) + H2O = 2''-O-succinyl-ADP-D-ribose + nicotinamide + L-lysyl-[protein]. NAD-dependent lysine deacetylase and desuccinylase that specifically removes acetyl and succinyl groups on target proteins. Modulates the activities of several proteins which are inactive in their acylated form. Deacetylates the N-terminal lysine residue of Alba, the major archaeal chromatin protein and that, in turn, increases Alba's DNA binding affinity, thereby repressing transcription. This Pyrococcus furiosus (strain ATCC 43587 / DSM 3638 / JCM 8422 / Vc1) protein is NAD-dependent protein deacylase.